The sequence spans 203 residues: ATP-dependent dethiobiotin synthetase BioD (203 aa).

Residue 11–16 (NVGKTI) coordinates ATP. Residue Thr15 participates in Mg(2+) binding. Residue Lys31 is part of the active site. Substrate is bound at residue Thr35. Residues Asp42 and 94-97 (EGAG) contribute to the ATP site. Residues Asp42 and Glu94 each coordinate Mg(2+).

This sequence belongs to the dethiobiotin synthetase family. Homodimer. Mg(2+) serves as cofactor.

The protein localises to the cytoplasm. The enzyme catalyses (7R,8S)-7,8-diammoniononanoate + CO2 + ATP = (4R,5S)-dethiobiotin + ADP + phosphate + 3 H(+). It participates in cofactor biosynthesis; biotin biosynthesis; biotin from 7,8-diaminononanoate: step 1/2. In terms of biological role, catalyzes a mechanistically unusual reaction, the ATP-dependent insertion of CO2 between the N7 and N8 nitrogen atoms of 7,8-diaminopelargonic acid (DAPA, also called 7,8-diammoniononanoate) to form a ureido ring. This chain is ATP-dependent dethiobiotin synthetase BioD, found in Lawsonia intracellularis (strain PHE/MN1-00).